A 465-amino-acid chain; its full sequence is UDP-N-acetylmuramate--L-alanine ligase (465 aa).

112–118 contributes to the ATP binding site; it reads GTHGKTT.

The protein belongs to the MurCDEF family.

The protein resides in the cytoplasm. The enzyme catalyses UDP-N-acetyl-alpha-D-muramate + L-alanine + ATP = UDP-N-acetyl-alpha-D-muramoyl-L-alanine + ADP + phosphate + H(+). Its pathway is cell wall biogenesis; peptidoglycan biosynthesis. Functionally, cell wall formation. This is UDP-N-acetylmuramate--L-alanine ligase from Burkholderia cenocepacia (strain HI2424).